The sequence spans 403 residues: Serine/threonine transporter SstT (403 aa).

The next 9 membrane-spanning stretches (helical) occupy residues 16–36, 45–65, 79–99, 138–158, 175–195, 214–234, 295–315, 327–347, and 353–373; these read QIVI…AIAL, FVSA…MASI, ILWL…VASM, ALLN…GVAL, GVTL…FGLV, LAVL…LIVF, MAGA…TLGI, MVAA…LLLI, and LFGI…IIGV.

Belongs to the dicarboxylate/amino acid:cation symporter (DAACS) (TC 2.A.23) family.

It localises to the cell inner membrane. It carries out the reaction L-serine(in) + Na(+)(in) = L-serine(out) + Na(+)(out). It catalyses the reaction L-threonine(in) + Na(+)(in) = L-threonine(out) + Na(+)(out). In terms of biological role, involved in the import of serine and threonine into the cell, with the concomitant import of sodium (symport system). The chain is Serine/threonine transporter SstT from Pseudomonas putida (strain W619).